Consider the following 497-residue polypeptide: Cysteine--tRNA ligase (497 aa).

Residue C32 coordinates Zn(2+). Residues 34–44 carry the 'HIGH' region motif; that stretch reads PTVYGEGHLGH. Zn(2+) is bound by residues C228, H253, and E257. The 'KMSKS' region motif lies at 285-289; that stretch reads KMGKS. K288 contributes to the ATP binding site.

The protein belongs to the class-I aminoacyl-tRNA synthetase family. Monomer. Zn(2+) is required as a cofactor.

It localises to the cytoplasm. The catalysed reaction is tRNA(Cys) + L-cysteine + ATP = L-cysteinyl-tRNA(Cys) + AMP + diphosphate. The protein is Cysteine--tRNA ligase of Cytophaga hutchinsonii (strain ATCC 33406 / DSM 1761 / CIP 103989 / NBRC 15051 / NCIMB 9469 / D465).